The primary structure comprises 306 residues: Recombination-associated protein RdgC (306 aa).

Belongs to the RdgC family.

It is found in the cytoplasm. The protein localises to the nucleoid. In terms of biological role, may be involved in recombination. The chain is Recombination-associated protein RdgC from Pseudomonas putida (strain GB-1).